A 379-amino-acid chain; its full sequence is 2-nitroimidazole nitrohydrolase (379 aa).

The active-site Amidino-cysteine intermediate is the Cys-357.

This sequence belongs to the arginine deiminase family.

It carries out the reaction 2-nitroimidazole + H2O = 1,3-dihydro-2H-imidazol-2-one + nitrite + H(+). Its function is as follows. Involved in the biodegradation of 2-Nitroimidazole (2NI) which is a natural antibiotic and an analog of the synthetic nitroimidazoles used for treatment of tuberculosis, Chagas disease (also called American Trypanosomiasis) and cancer. Catalyzes the hydrolytic denitration of 2NI to produce imidazol-2-one and nitrite. It is also active against the 2NI synthetic derivative benznidazole. NnhA confers drug resistance to 2NI. The protein is 2-nitroimidazole nitrohydrolase (nnhA) of Mycobacterium sp. (strain JS330).